A 342-amino-acid polypeptide reads, in one-letter code: MAAEEEDEVEWVVESIAGFLRGPDWSIPILDFVEQKCEVFDDEEESKLTYTEIHQEYKELVEKLLEGYLKEIGINEDQFQEACTSPLAKTHTSQAILQPVLAAEDFTIFKAMMVQKNIEMQLQAIRIIQERNGVLPDCLTDGSDVVSDLEHEEMKILREVLRKSKEEYDQEEERKRKKQLSEAKTEEPTVHSSEAAIMNNSQGDGEHFAHPPSEVKMHFANQSIEPLGRKVERSETSSLPQKDLKIPGLEHASIEGPIANLSVLGTEELRQREHYLKQKRDKLMSMRKDMRTKQIQNMEQKGKPTGEVEEMTEKPEMTAEEKQTLLKRRLLAEKLKEEVINK.

A phosphoserine mark is found at Ser-85 and Ser-147. Residues 150 to 187 adopt a coiled-coil conformation; sequence EHEEMKILREVLRKSKEEYDQEEERKRKKQLSEAKTEE. The tract at residues 166 to 194 is disordered; it reads EEYDQEEERKRKKQLSEAKTEEPTVHSSE. A compositionally biased stretch (basic and acidic residues) spans 179–189; that stretch reads QLSEAKTEEPT. Ser-201 carries the post-translational modification Phosphoserine. Disordered stretches follow at residues 229-250 and 282-322; these read RKVE…PGLE and KLMS…AEEK. Basic and acidic residues-rich tracts occupy residues 282–292 and 300–322; these read KLMSMRKDMRT and QKGK…AEEK.

Belongs to the CFAP36 family. In terms of assembly, interacts with ARL3. Expressed in several human tissues including brain, testis, heart, lung, pancreas and spleen (at protein level).

The protein localises to the nucleus. It localises to the cytoplasm. Its subcellular location is the cell projection. It is found in the cilium. The protein resides in the flagellum. May act as an effector for ARL3. This is Cilia- and flagella-associated protein 36 (CFAP36) from Homo sapiens (Human).